The following is a 451-amino-acid chain: 3-carboxy-cis,cis-muconate cycloisomerase (451 aa).

The protein belongs to the class-II fumarase/aspartase family. In terms of assembly, homotetramer.

The enzyme catalyses 2-(carboxymethyl)-5-oxo-2,5-dihydro-2-furoate = 3-carboxy-cis,cis-muconate + H(+). It functions in the pathway aromatic compound metabolism; beta-ketoadipate pathway; 5-oxo-4,5-dihydro-2-furylacetate from 3-carboxy-cis,cis-muconate: step 1/2. In terms of biological role, catalyzes an anti cycloisomerization. The polypeptide is 3-carboxy-cis,cis-muconate cycloisomerase (pcaB) (Acinetobacter baylyi (strain ATCC 33305 / BD413 / ADP1)).